Consider the following 111-residue polypeptide: Ig kappa chain V-III region PC 6684 (111 aa).

Positions Asp1–Cys23 are framework-1. A disulfide bridge links Cys23 with Cys92. Residues Arg24 to His38 form a complementarity-determining-1 region. The framework-2 stretch occupies residues Trp39 to Tyr53. A complementarity-determining-2 region spans residues Leu54–Ser60. Residues Gly61–Cys92 are framework-3. The segment at Gln93 to Thr101 is complementarity-determining-3. A framework-4 region spans residues Phe102–Lys111.

This chain is Ig kappa chain V-III region PC 6684, found in Mus musculus (Mouse).